Reading from the N-terminus, the 401-residue chain is Nodal homolog 3-B (401 aa).

Positions 1 to 18 (MAFLSLFLCLVFSSPLMA) are cleaved as a signal peptide. Positions 19 to 274 (MPPALQGRKA…KVNGFRRLRR (256 aa)) are excised as a propeptide. Residues asparagine 168, asparagine 337, and asparagine 344 are each glycosylated (N-linked (GlcNAc...) asparagine). Disulfide bonds link cysteine 299–cysteine 365 and cysteine 328–cysteine 396.

Belongs to the TGF-beta family. Monomer. The propeptide region interacts with bmp4 in a non-covalent manner. Expressed in the dorsal marginal region of late blastula, becoming restricted to the Spemann organizer at the early gastrula stage.

The protein localises to the secreted. Its function is as follows. Exhibits mesoderm-dorsalizing activity and neural-inducing activity, but lacks mesoderm-inducing activity. Regulates the expression of specific mesodermal and neural genes. Induces convergent extension movements at the embryonic midline by activating the fgf signaling pathway to induce t/bra expression in the organizer region. Acts with wnt11 to induce Spemann organizer cells and induce axis formation. The unprocessed protein antagonizes bmp-signaling. The polypeptide is Nodal homolog 3-B (Xenopus tropicalis (Western clawed frog)).